A 408-amino-acid chain; its full sequence is GTPase HflX (408 aa).

The region spanning Pro198–Tyr361 is the Hflx-type G domain. GTP contacts are provided by residues Gly204–Ser211, Phe229–Asp233, Asp251–Gly254, Asn317–Asp320, and Ser339–Lys341. Ser211 and Thr231 together coordinate Mg(2+).

It belongs to the TRAFAC class OBG-HflX-like GTPase superfamily. HflX GTPase family. Monomer. Associates with the 50S ribosomal subunit. Mg(2+) is required as a cofactor.

It localises to the cytoplasm. GTPase that associates with the 50S ribosomal subunit and may have a role during protein synthesis or ribosome biogenesis. The protein is GTPase HflX of Spirochaeta thermophila (strain ATCC 49972 / DSM 6192 / RI 19.B1).